Here is a 247-residue protein sequence, read N- to C-terminus: MVRLASLAVLGSVIATASAHTRVWGVYVNGEYQGDGIGQYVRSPPTNNPVKDLTSAAMKCNVNDAREFEVPKRVSVAGGDELSFEWYHDYRNDDIIASSHHGPIQVYMSGDDGATWTKIASDGYDTGSSTWAVDRLISAGGKHSVIIPDVPAGDYLLRAEIVALHEADVAYDQNPIRGAQNYPSCTQITVTSNGSDALPADGVKFPGAYTDSTPGIIFNIWPPNAQDPATYQVPGPAVWDKAPGGSV.

The first 19 residues, 1–19 (MVRLASLAVLGSVIATASA), serve as a signal peptide directing secretion. The Cu(2+) site is built by His20 and His100. A disulfide bridge connects residues Cys60 and Cys185. Position 165 (His165) interacts with O2. Tyr182 provides a ligand contact to Cu(2+). N-linked (GlcNAc...) asparagine glycosylation is present at Asn193.

This sequence belongs to the polysaccharide monooxygenase AA9 family. Requires Cu(2+) as cofactor.

The protein resides in the secreted. The catalysed reaction is [(1-&gt;4)-beta-D-glucosyl]n+m + reduced acceptor + O2 = 4-dehydro-beta-D-glucosyl-[(1-&gt;4)-beta-D-glucosyl]n-1 + [(1-&gt;4)-beta-D-glucosyl]m + acceptor + H2O.. Functionally, lytic polysaccharide monooxygenase (LPMO) that depolymerizes polysaccharides via the oxidation of scissile alpha- or beta-(1-4)-glycosidic bonds, yielding C4 oxidation products. Catalysis by LPMOs requires the reduction of the active-site copper from Cu(II) to Cu(I) by a reducing agent and H(2)O(2) or O(2) as a cosubstrate. Shows C4-oxidative cleavage of amorphous cellulose and soluble cello-oligosaccharides. Also active on xyloglucan, mixed-linkage beta-glucan, and glucomannan. Not active on crystalline forms of cellulose. Has higher affinity for linear substrates compared to branched substrates. Catalyzes a fast and specific peroxygenase reaction that is at least two orders of magnitude faster than the apparent monooxygenase reaction. This chain is AA9 family lytic polysaccharide monooxygenase A, found in Schizophyllum commune (strain H4-8 / FGSC 9210) (Split gill fungus).